The chain runs to 377 residues: tRNA pseudouridine synthase Pus10 (377 aa).

The active-site Nucleophile is the D206. Y270 and Y339 together coordinate substrate.

It belongs to the pseudouridine synthase Pus10 family.

The catalysed reaction is uridine(54) in tRNA = pseudouridine(54) in tRNA. It carries out the reaction uridine(55) in tRNA = pseudouridine(55) in tRNA. Functionally, responsible for synthesis of pseudouridine from uracil-54 and uracil-55 in the psi GC loop of transfer RNAs. The polypeptide is tRNA pseudouridine synthase Pus10 (Picrophilus torridus (strain ATCC 700027 / DSM 9790 / JCM 10055 / NBRC 100828 / KAW 2/3)).